Here is a 411-residue protein sequence, read N- to C-terminus: Putative acid phosphatase 10 (411 aa).

The active-site Nucleophile is the H33. Residue D313 is the Proton donor of the active site. An intrachain disulfide couples C379 to C385.

Belongs to the histidine acid phosphatase family.

It catalyses the reaction a phosphate monoester + H2O = an alcohol + phosphate. This chain is Putative acid phosphatase 10 (pho-10), found in Caenorhabditis elegans.